The chain runs to 255 residues: Ribosomal RNA small subunit methyltransferase G 2 (255 aa).

S-adenosyl-L-methionine-binding residues include G90, F95, and R155. Positions 233-245 (EDEGEELLMDELS) are enriched in acidic residues. A disordered region spans residues 233–255 (EDEGEELLMDELSNEEKRRWAKY). Residues 246-255 (NEEKRRWAKY) show a composition bias toward basic and acidic residues.

Belongs to the methyltransferase superfamily. RNA methyltransferase RsmG family.

Its subcellular location is the cytoplasm. The catalysed reaction is guanosine(527) in 16S rRNA + S-adenosyl-L-methionine = N(7)-methylguanosine(527) in 16S rRNA + S-adenosyl-L-homocysteine. Its function is as follows. Specifically methylates the N7 position of guanine in position 527 of 16S rRNA. In Bdellovibrio bacteriovorus (strain ATCC 15356 / DSM 50701 / NCIMB 9529 / HD100), this protein is Ribosomal RNA small subunit methyltransferase G 2.